The following is a 62-amino-acid chain: Large ribosomal subunit protein uL30 (62 aa).

This sequence belongs to the universal ribosomal protein uL30 family. Part of the 50S ribosomal subunit.

This Nitrosospira multiformis (strain ATCC 25196 / NCIMB 11849 / C 71) protein is Large ribosomal subunit protein uL30.